We begin with the raw amino-acid sequence, 105 residues long: Small ribosomal subunit protein uS10 (105 aa).

It belongs to the universal ribosomal protein uS10 family. In terms of assembly, part of the 30S ribosomal subunit.

Functionally, involved in the binding of tRNA to the ribosomes. This is Small ribosomal subunit protein uS10 from Trichormus variabilis (strain ATCC 29413 / PCC 7937) (Anabaena variabilis).